The following is a 395-amino-acid chain: tRNA-specific 2-thiouridylase MnmA (395 aa).

Residues 6-13 (AMSGGVDS) and leucine 32 contribute to the ATP site. Residue cysteine 101 is the Nucleophile of the active site. Cysteines 101 and 193 form a disulfide. Glycine 125 serves as a coordination point for ATP. Residues 143–145 (KDQ) are interaction with tRNA. Catalysis depends on cysteine 193, which acts as the Cysteine persulfide intermediate.

This sequence belongs to the MnmA/TRMU family.

It localises to the cytoplasm. The enzyme catalyses S-sulfanyl-L-cysteinyl-[protein] + uridine(34) in tRNA + AH2 + ATP = 2-thiouridine(34) in tRNA + L-cysteinyl-[protein] + A + AMP + diphosphate + H(+). Functionally, catalyzes the 2-thiolation of uridine at the wobble position (U34) of tRNA, leading to the formation of s(2)U34. The protein is tRNA-specific 2-thiouridylase MnmA of Corynebacterium jeikeium (strain K411).